Reading from the N-terminus, the 285-residue chain is UPF0703 protein YcgQ (285 aa).

Transmembrane regions (helical) follow at residues leucine 4 to threonine 24, leucine 34 to isoleucine 54, leucine 89 to leucine 109, and phenylalanine 210 to valine 230.

This sequence belongs to the UPF0703 family.

The protein resides in the cell membrane. This chain is UPF0703 protein YcgQ (ycgQ), found in Bacillus subtilis (strain 168).